A 122-amino-acid polypeptide reads, in one-letter code: uncharacterized protein (122 aa).

Disordered regions lie at residues methionine 1–glutamate 30 and phenylalanine 96–glycine 122.

This is an uncharacterized protein from Homo sapiens (Human).